The primary structure comprises 632 residues: Golgin subfamily A member 8M (632 aa).

The segment at Met1–Ser77 is disordered. Residues Thr38–Gly50 are compositionally biased toward polar residues. Coiled coils occupy residues Leu86 to Arg154 and Lys209 to Ala421. The segment covering Lys352–Lys362 has biased composition (basic and acidic residues). 3 disordered regions span residues Lys352–Thr384, Leu422–Met456, and Asp505–Glu524. Residues Leu508–Gly520 are compositionally biased toward gly residues.

This sequence belongs to the GOLGA8 family.

This Homo sapiens (Human) protein is Golgin subfamily A member 8M.